A 616-amino-acid polypeptide reads, in one-letter code: Hemagglutinin-neuraminidase (616 aa).

Topologically, residues 1–26 (MDRAVSQVALENDEREAKNTWRLVFR) are intravirion. A helical membrane pass occupies residues 27 to 47 (IAILLLTVVTLAISAAALAYS). The Virion surface segment spans residues 48 to 616 (MEASTPSDLV…ELESYAASWP (569 aa)). An N-linked (GlcNAc...) asparagine; by host glycan is attached at Asn-119. An important for interaction with fusion/F protein region spans residues 124 to 152 (GAPIHDPDYIGGIGKELIVDDASDVTSFY). 3 cysteine pairs are disulfide-bonded: Cys-172–Cys-196, Cys-186–Cys-247, and Cys-238–Cys-251. An involved in neuraminidase activity region spans residues 234 to 239 (NRKSCS). Asn-341 and Asn-433 each carry an N-linked (GlcNAc...) asparagine; by host glycan. 2 disulfides stabilise this stretch: Cys-344–Cys-461 and Cys-455–Cys-465. Asn-481, Asn-538, and Asn-600 each carry an N-linked (GlcNAc...) asparagine; by host glycan. An intrachain disulfide couples Cys-531 to Cys-542.

It belongs to the paramyxoviruses hemagglutinin-neuraminidase family. In terms of assembly, homotetramer; composed of disulfide-linked homodimers. Interacts with F protein trimer. Interacts with host CG-1B; this interaction inhibits viral adsorption and replication rather than internalization.

It localises to the virion membrane. It is found in the host cell membrane. It catalyses the reaction Hydrolysis of alpha-(2-&gt;3)-, alpha-(2-&gt;6)-, alpha-(2-&gt;8)- glycosidic linkages of terminal sialic acid residues in oligosaccharides, glycoproteins, glycolipids, colominic acid and synthetic substrates.. Functionally, mediates the viral entry into the host cell together with fusion/F protein. Attaches the virus to sialic acid-containing cell receptors and thereby initiates infection. Binding of HN protein to the receptor induces a conformational change that allows the F protein to trigger virion/cell membranes fusion. In terms of biological role, neuraminidase activity ensures the efficient spread of the virus by dissociating the mature virions from the neuraminic acid containing glycoproteins. This is Hemagglutinin-neuraminidase (HN) from Gallus gallus (Chicken).